Reading from the N-terminus, the 474-residue chain is Protein Rv3254 (474 aa).

Positions 1 to 4 are excised as a propeptide; sequence MTGR.

This is Protein Rv3254 from Mycobacterium tuberculosis (strain ATCC 25618 / H37Rv).